Here is a 262-residue protein sequence, read N- to C-terminus: Apolipoprotein A-Ia (262 aa).

A signal peptide spans 1–18; the sequence is MKFVALALTLLLALGSQA. A 3 X approximate tandem repeats region spans residues 32-63; that stretch reads YKAAALVYLNQVKDQAEKALDNLDGTDYEQYK. Tandem repeats lie at residues 64-85 and 87-107. The 10 X approximate tandem repeats stretch occupies residues 64–262; the sequence is LQLSESLTKL…YETIAKAIQA (199 aa). Residues 108 to 118 form a 3; half-length repeat; the sequence is TDVEDLRSKLE. A run of 5 repeats spans residues 119 to 140, 141 to 162, 163 to 184, 185 to 206, and 207 to 228. The stretch at 229 to 239 is one 9; half-length repeat; the sequence is PHTQDLQTRME. Residues 240–262 form repeat 10; the sequence is PYMENVRTTFAQMYETIAKAIQA.

It belongs to the apolipoprotein A1/A4/E family. As to quaternary structure, homodimer. Interacts with naxe and yjefn3.

It is found in the secreted. Its function is as follows. Participates in the reverse transport of cholesterol from tissues to the liver for excretion by promoting cholesterol efflux from tissues and by acting as a cofactor for the lecithin cholesterol acyltransferase (LCAT). This chain is Apolipoprotein A-Ia, found in Danio rerio (Zebrafish).